Consider the following 296-residue polypeptide: Centromere protein O (296 aa).

Positions 17–105 (VLAHLERLET…NMKAILQAYR (89 aa)) form a coiled coil.

Belongs to the CENP-O/MCM21 family. In terms of assembly, component of the CENPA-CAD complex, composed of CENPI, CENPK, CENPL, CENPO, CENPP, CENPQ, CENPR and CENPS. The CENPA-CAD complex interacts with the CENPA-NAC complex, at least composed of CENPA, CENPC, CENPH, CENPM, CENPN, CENPT and CENPU.

Its subcellular location is the nucleus. It is found in the chromosome. The protein resides in the centromere. The protein localises to the kinetochore. Its function is as follows. Component of the CENPA-CAD (nucleosome distal) complex, a complex recruited to centromeres which is involved in assembly of kinetochore proteins, mitotic progression and chromosome segregation. May be involved in incorporation of newly synthesized CENPA into centromeres via its interaction with the CENPA-NAC complex. Modulates the kinetochore-bound levels of NDC80 complex. The polypeptide is Centromere protein O (CENPO) (Bos taurus (Bovine)).